Reading from the N-terminus, the 424-residue chain is Hemagglutinin-esterase (424 aa).

The signal sequence occupies residues 1–16 (MFLLPRFVLVSCIIGS). The tract at residues 7-127 (FVLVSCIIGS…SNDIWMQNKG (121 aa)) is esterase domain 1. Residues 17–392 (LGFENPPTNV…PICVYDPLPL (376 aa)) lie on the Virion surface side of the membrane. The active-site Nucleophile is the S40. C44 and C65 are disulfide-bonded. N54, N89, N153, N236, and N301 each carry an N-linked (GlcNAc...) asparagine; by host glycan. Disulfide bonds link C113–C162, C197–C276, and C205–C249. Residues 128–266 (LFYTQVYKNM…GNYLAISNEL (139 aa)) are receptor binding. The esterase domain 2 stretch occupies residues 267–379 (LLTVPTKAIC…RCPTAADINT (113 aa)). Cysteines 307 and 312 form a disulfide. The N-linked (GlcNAc...) asparagine; by host glycan is linked to N316. Residues D326 and H329 each act as charge relay system in the active site. Cysteines 347 and 371 form a disulfide. N-linked (GlcNAc...) asparagine; by host glycosylation occurs at N358. A helical membrane pass occupies residues 393 to 413 (ILLGILLGVAVIIIVVLLLYF). Residues 414–424 (MVDNGTRLHDA) are Intravirion-facing. The N-linked (GlcNAc...) asparagine; by host glycan is linked to N417.

It belongs to the influenza type C/coronaviruses hemagglutinin-esterase family. Homodimer; disulfide-linked. Forms a complex with the M protein in the pre-Golgi. Associates then with S-M complex to form a ternary complex S-M-HE. In terms of processing, N-glycosylated in the host RER.

Its subcellular location is the virion membrane. It is found in the host cell membrane. The enzyme catalyses N-acetyl-9-O-acetylneuraminate + H2O = N-acetylneuraminate + acetate + H(+). It carries out the reaction N-acetyl-4-O-acetylneuraminate + H2O = N-acetylneuraminate + acetate + H(+). Functionally, structural protein that makes short spikes at the surface of the virus. Contains receptor binding and receptor-destroying activities. Mediates de-O-acetylation of N-acetyl-4-O-acetylneuraminic acid, which is probably the receptor determinant recognized by the virus on the surface of erythrocytes and susceptible cells. This receptor-destroying activity is important for virus release as it probably helps preventing self-aggregation and ensures the efficient spread of the progeny virus from cell to cell. May serve as a secondary viral attachment protein for initiating infection, the spike protein being the major one. May become a target for both the humoral and the cellular branches of the immune system. This chain is Hemagglutinin-esterase, found in Bovine coronavirus (strain G95) (BCoV).